A 482-amino-acid chain; its full sequence is Adenylyltransferase and sulfurtransferase MOCS3-2 (482 aa).

ATP-binding positions include G125, D146, 153–157 (NNLHR), K170, and 214–215 (DN). Residues C255 and C258 each contribute to the Zn(2+) site. Catalysis depends on C272, which acts as the Glycyl thioester intermediate; for adenylyltransferase activity. Residues C330 and C333 each contribute to the Zn(2+) site. A Rhodanese domain is found at 385–480 (DGEPHLLLDV…WGQDVDPDFP (96 aa)). Catalysis depends on C440, which acts as the Cysteine persulfide intermediate; for sulfurtransferase activity.

The protein in the N-terminal section; belongs to the HesA/MoeB/ThiF family. UBA4 subfamily. Zn(2+) is required as a cofactor.

The protein localises to the cytoplasm. It catalyses the reaction [molybdopterin-synthase sulfur-carrier protein]-C-terminal Gly-Gly + ATP + H(+) = [molybdopterin-synthase sulfur-carrier protein]-C-terminal Gly-Gly-AMP + diphosphate. It carries out the reaction [molybdopterin-synthase sulfur-carrier protein]-C-terminal Gly-Gly-AMP + S-sulfanyl-L-cysteinyl-[cysteine desulfurase] + AH2 = [molybdopterin-synthase sulfur-carrier protein]-C-terminal-Gly-aminoethanethioate + L-cysteinyl-[cysteine desulfurase] + A + AMP + 2 H(+). It participates in tRNA modification; 5-methoxycarbonylmethyl-2-thiouridine-tRNA biosynthesis. It functions in the pathway cofactor biosynthesis; molybdopterin biosynthesis. Plays a central role in 2-thiolation of mcm(5)S(2)U at tRNA wobble positions of cytosolic tRNA(Lys), tRNA(Glu) and tRNA(Gln). Also essential during biosynthesis of the molybdenum cofactor. Acts by mediating the C-terminal thiocarboxylation of sulfur carriers URM1 and MOCS2A. Its N-terminus first activates URM1 and MOCS2A as acyl-adenylates (-COAMP), then the persulfide sulfur on the catalytic cysteine is transferred to URM1 and MOCS2A to form thiocarboxylation (-COSH) of their C-terminus. The reaction probably involves hydrogen sulfide that is generated from the persulfide intermediate and that acts as a nucleophile towards URM1 and MOCS2A. Subsequently, a transient disulfide bond is formed. Does not use thiosulfate as sulfur donor; NFS1 probably acting as a sulfur donor for thiocarboxylation reactions. The chain is Adenylyltransferase and sulfurtransferase MOCS3-2 from Zea mays (Maize).